The sequence spans 279 residues: Thymidylate synthase (279 aa).

Arg37 provides a ligand contact to dUMP. His67 lines the (6R)-5,10-methylene-5,6,7,8-tetrahydrofolate pocket. 142–143 contacts dUMP; sequence RR. Cys162 functions as the Nucleophile in the catalytic mechanism. DUMP-binding positions include 182–185, Asn193, and 223–225; these read RSAD and HLY. (6R)-5,10-methylene-5,6,7,8-tetrahydrofolate is bound at residue Asp185. Residue Ser278 coordinates (6R)-5,10-methylene-5,6,7,8-tetrahydrofolate.

Belongs to the thymidylate synthase family. Bacterial-type ThyA subfamily. As to quaternary structure, homodimer.

The protein localises to the cytoplasm. The catalysed reaction is dUMP + (6R)-5,10-methylene-5,6,7,8-tetrahydrofolate = 7,8-dihydrofolate + dTMP. Its pathway is pyrimidine metabolism; dTTP biosynthesis. In terms of biological role, catalyzes the reductive methylation of 2'-deoxyuridine-5'-monophosphate (dUMP) to 2'-deoxythymidine-5'-monophosphate (dTMP) while utilizing 5,10-methylenetetrahydrofolate (mTHF) as the methyl donor and reductant in the reaction, yielding dihydrofolate (DHF) as a by-product. This enzymatic reaction provides an intracellular de novo source of dTMP, an essential precursor for DNA biosynthesis. The polypeptide is Thymidylate synthase (Caulobacter vibrioides (strain ATCC 19089 / CIP 103742 / CB 15) (Caulobacter crescentus)).